A 594-amino-acid chain; its full sequence is Segmentation polarity homeobox protein engrailed (594 aa).

Disordered regions lie at residues 1 to 64 (MALE…TRDE), 76 to 127 (IKQE…PASI), 141 to 164 (KATA…ISPG), 198 to 217 (HYYQ…PQRA), 231 to 299 (ISKS…PTGS), 387 to 458 (AGTG…GSEN), and 474 to 501 (DRPS…RPRT). Low complexity predominate over residues 22–60 (SQSPTSTTTVTMATASPVPACTTTTTTTSTSGASAASSP). Over residues 92 to 112 (PHHHQHPHHHQLPHHPHHQHH) the composition is skewed to basic residues. The span at 151 to 164 (HPQPPAIREPISPG) shows a compositional bias: pro residues. A compositionally biased stretch (polar residues) spans 237 to 247 (LCSSNGSSSAT). 2 stretches are compositionally biased toward low complexity: residues 278–299 (ASPS…PTGS) and 387–402 (AGTG…ANGA). 2 stretches are compositionally biased toward polar residues: residues 426–436 (SSETNGSSSQD) and 448–458 (ETSSTKDGSEN). A compositionally biased stretch (basic and acidic residues) spans 487 to 499 (QPKEKGDSEEKRP). A DNA-binding region (homeobox) is located at residues 496 to 555 (EKRPRTAFSNAQLQRLKNEFNENRYLTEKRRQTLSAELGLNEAQIKIWFQNKRAKIKKSS).

This sequence belongs to the engrailed homeobox family.

The protein localises to the nucleus. Its function is as follows. This protein specifies the body segmentation pattern. It is required for the development of the central nervous system. Transcriptional regulator that repress activated promoters. The polypeptide is Segmentation polarity homeobox protein engrailed (en) (Anopheles gambiae (African malaria mosquito)).